The chain runs to 261 residues: MGPIPRSITRTLSRFRTELTSESSPLVIHELKVAKYKVSASLQYLAFLVFLPWGISISFQEGLGPWVTNWWNTGQSKIFFSYLQEENALERFGEIEELFLLERMVEDSSETHSQDLRIEIHRKTIQLVKMYNKDCIQIISHLLTNMICFAISSAYFIMSKKKLTVLNSWIQELFYSLSDTMKAFSIISVTDLCIGFHSTHGWELMIDSISENYGFVHNEQIISGLVPTFPVISDTIFKYWIFRHFNRISPPLVVIYHSMNE.

2 helical membrane passes run 47–67 and 138–158; these read FLVF…GPWV and IISH…YFIM.

It belongs to the CemA family.

The protein resides in the plastid. It localises to the chloroplast inner membrane. The catalysed reaction is K(+)(in) + H(+)(out) = K(+)(out) + H(+)(in). Contributes to K(+)/H(+) antiport activity by supporting proton efflux to control proton extrusion and homeostasis in chloroplasts in a light-dependent manner to modulate photosynthesis. Prevents excessive induction of non-photochemical quenching (NPQ) under continuous-light conditions. Indirectly promotes efficient inorganic carbon uptake into chloroplasts. The sequence is that of Potassium/proton antiporter CemA from Ginkgo biloba (Ginkgo).